The chain runs to 363 residues: Class I histocompatibility antigen, Gogo-B*0201 alpha chain (363 aa).

The signal sequence occupies residues 1 to 24; sequence MQVTAPRTLLLLLSAALALTETWA. Positions 25–114 are alpha-1; that stretch reads GSHSMRYFHT…LRGYYNQSED (90 aa). The Extracellular segment spans residues 25–308; the sequence is GSHSMRYFHT…EPSSQSTIPI (284 aa). Asn110 carries an N-linked (GlcNAc...) asparagine glycan. The tract at residues 115 to 206 is alpha-2; it reads GSHTIQRMYG…ENGKETLQRA (92 aa). Disulfide bonds link Cys125–Cys188 and Cys227–Cys283. Residues 207–298 are alpha-3; sequence DPPKTHVTHH…GLPEPLTLRW (92 aa). An Ig-like C1-type domain is found at 209-297; it reads PKTHVTHHPI…EGLPEPLTLR (89 aa). Residues 299–308 form a connecting peptide region; it reads EPSSQSTIPI. The chain crosses the membrane as a helical span at residues 309-333; it reads VGIVAGLAVLVVTVAVVAVVAAVMC. Over 334–363 the chain is Cytoplasmic; that stretch reads RRKSSGGKGGSYSQAASSDSAQGSDVSLTA. Residues 336-363 are disordered; the sequence is KSSGGKGGSYSQAASSDSAQGSDVSLTA. The segment covering 344–363 has biased composition (low complexity); that stretch reads SYSQAASSDSAQGSDVSLTA.

This sequence belongs to the MHC class I family. In terms of assembly, heterodimer of an alpha chain and a beta chain (beta-2-microglobulin).

It localises to the membrane. Involved in the presentation of foreign antigens to the immune system. The polypeptide is Class I histocompatibility antigen, Gogo-B*0201 alpha chain (Gorilla gorilla gorilla (Western lowland gorilla)).